The chain runs to 320 residues: ATP-dependent 6-phosphofructokinase (320 aa).

Gly12 is a binding site for ATP. 22-26 (RGVVR) provides a ligand contact to ADP. Residues 73–74 (RF) and 103–106 (GDGS) contribute to the ATP site. Asp104 contributes to the Mg(2+) binding site. Position 126-128 (126-128 (TID)) interacts with substrate. Catalysis depends on Asp128, which acts as the Proton acceptor. Arg155 contacts ADP. Residues Arg163 and 170-172 (MGR) each bind substrate. ADP contacts are provided by residues 186 to 188 (GCE), Lys212, and 214 to 216 (KKH). Substrate contacts are provided by residues Glu223, Arg244, and 250-253 (HIQR).

The protein belongs to the phosphofructokinase type A (PFKA) family. ATP-dependent PFK group I subfamily. Prokaryotic clade 'B1' sub-subfamily. In terms of assembly, homotetramer. Mg(2+) is required as a cofactor.

Its subcellular location is the cytoplasm. The catalysed reaction is beta-D-fructose 6-phosphate + ATP = beta-D-fructose 1,6-bisphosphate + ADP + H(+). The protein operates within carbohydrate degradation; glycolysis; D-glyceraldehyde 3-phosphate and glycerone phosphate from D-glucose: step 3/4. With respect to regulation, allosterically activated by ADP and other diphosphonucleosides, and allosterically inhibited by phosphoenolpyruvate. Its function is as follows. Catalyzes the phosphorylation of D-fructose 6-phosphate to fructose 1,6-bisphosphate by ATP, the first committing step of glycolysis. In Vibrio vulnificus (strain CMCP6), this protein is ATP-dependent 6-phosphofructokinase.